Consider the following 165-residue polypeptide: Protein SprT (165 aa).

The region spanning 22-163 is the SprT-like domain; sequence LAQANLKLDR…RCVHCGEPLV (142 aa). Position 78 (His-78) interacts with Zn(2+). Glu-79 is a catalytic residue. His-82 contacts Zn(2+).

Belongs to the SprT family. Zn(2+) serves as cofactor.

The protein localises to the cytoplasm. The polypeptide is Protein SprT (Salmonella agona (strain SL483)).